A 419-amino-acid polypeptide reads, in one-letter code: Glutamyl-tRNA reductase (419 aa).

Residues 49–52 (TCNR), serine 107, 112–114 (EPQ), and glutamine 118 contribute to the substrate site. The Nucleophile role is filled by cysteine 50. 187 to 192 (GAGETI) provides a ligand contact to NADP(+).

The protein belongs to the glutamyl-tRNA reductase family. As to quaternary structure, homodimer.

The enzyme catalyses (S)-4-amino-5-oxopentanoate + tRNA(Glu) + NADP(+) = L-glutamyl-tRNA(Glu) + NADPH + H(+). It functions in the pathway porphyrin-containing compound metabolism; protoporphyrin-IX biosynthesis; 5-aminolevulinate from L-glutamyl-tRNA(Glu): step 1/2. In terms of biological role, catalyzes the NADPH-dependent reduction of glutamyl-tRNA(Glu) to glutamate 1-semialdehyde (GSA). This is Glutamyl-tRNA reductase from Vibrio vulnificus (strain CMCP6).